Consider the following 171-residue polypeptide: 3-hydroxydecanoyl-[acyl-carrier-protein] dehydratase (171 aa).

Residue His-70 is part of the active site.

The protein belongs to the thioester dehydratase family. FabA subfamily. Homodimer.

The protein resides in the cytoplasm. It catalyses the reaction a (3R)-hydroxyacyl-[ACP] = a (2E)-enoyl-[ACP] + H2O. The enzyme catalyses (3R)-hydroxydecanoyl-[ACP] = (2E)-decenoyl-[ACP] + H2O. The catalysed reaction is (2E)-decenoyl-[ACP] = (3Z)-decenoyl-[ACP]. Its pathway is lipid metabolism; fatty acid biosynthesis. In terms of biological role, necessary for the introduction of cis unsaturation into fatty acids. Catalyzes the dehydration of (3R)-3-hydroxydecanoyl-ACP to E-(2)-decenoyl-ACP and then its isomerization to Z-(3)-decenoyl-ACP. Can catalyze the dehydratase reaction for beta-hydroxyacyl-ACPs with saturated chain lengths up to 16:0, being most active on intermediate chain length. This chain is 3-hydroxydecanoyl-[acyl-carrier-protein] dehydratase, found in Colwellia psychrerythraea (strain 34H / ATCC BAA-681) (Vibrio psychroerythus).